The primary structure comprises 190 residues: Holliday junction branch migration complex subunit RuvA (190 aa).

The domain I stretch occupies residues 1 to 64; it reads MIGRITGTLI…EDAQLLYGFG (64 aa). The domain II stretch occupies residues 65-137; sequence SSAERSTFRE…MRGKLGADIG (73 aa). The tract at residues 137–141 is flexible linker; it reads GATPH. The interval 142–190 is domain III; that stretch reads AAGGHQSDILNALLALGYSDKESQAALKKLPEGVDVSEGIRLALKALVR.

It belongs to the RuvA family. In terms of assembly, homotetramer. Forms an RuvA(8)-RuvB(12)-Holliday junction (HJ) complex. HJ DNA is sandwiched between 2 RuvA tetramers; dsDNA enters through RuvA and exits via RuvB. An RuvB hexamer assembles on each DNA strand where it exits the tetramer. Each RuvB hexamer is contacted by two RuvA subunits (via domain III) on 2 adjacent RuvB subunits; this complex drives branch migration. In the full resolvosome a probable DNA-RuvA(4)-RuvB(12)-RuvC(2) complex forms which resolves the HJ.

The protein localises to the cytoplasm. Functionally, the RuvA-RuvB-RuvC complex processes Holliday junction (HJ) DNA during genetic recombination and DNA repair, while the RuvA-RuvB complex plays an important role in the rescue of blocked DNA replication forks via replication fork reversal (RFR). RuvA specifically binds to HJ cruciform DNA, conferring on it an open structure. The RuvB hexamer acts as an ATP-dependent pump, pulling dsDNA into and through the RuvAB complex. HJ branch migration allows RuvC to scan DNA until it finds its consensus sequence, where it cleaves and resolves the cruciform DNA. This Bordetella parapertussis (strain 12822 / ATCC BAA-587 / NCTC 13253) protein is Holliday junction branch migration complex subunit RuvA.